Consider the following 111-residue polypeptide: Cytochrome c (111 aa).

S1 carries the N-acetylserine modification. 3 residues coordinate heme c: C22, C25, and H26. K80 carries the post-translational modification N6,N6,N6-trimethyllysine. Heme c is bound at residue M88.

This sequence belongs to the cytochrome c family. Binds 1 heme c group covalently per subunit.

The protein localises to the mitochondrion intermembrane space. In terms of biological role, electron carrier protein. The oxidized form of the cytochrome c heme group can accept an electron from the heme group of the cytochrome c1 subunit of cytochrome reductase. Cytochrome c then transfers this electron to the cytochrome oxidase complex, the final protein carrier in the mitochondrial electron-transport chain. The sequence is that of Cytochrome c from Ulva intestinalis (Hollow green nori).